A 227-amino-acid chain; its full sequence is Thymidine kinase (227 aa).

ATP is bound by residues 15-22 (GSMFSGKT) and 87-90 (DEAQ). E88 acts as the Proton acceptor in catalysis. The Zn(2+) site is built by C144, C147, C176, and C179. Residues 198–227 (RAVATDDADASTNEADPEAADAASADGTAA) are disordered. Residues 217–227 (ADAASADGTAA) are compositionally biased toward low complexity.

This sequence belongs to the thymidine kinase family. Homotetramer.

The protein localises to the cytoplasm. The catalysed reaction is thymidine + ATP = dTMP + ADP + H(+). This Salinibacter ruber (strain DSM 13855 / M31) protein is Thymidine kinase.